The chain runs to 529 residues: Peptide chain release factor 3 (529 aa).

Positions Ala-11–Gln-280 constitute a tr-type G domain. GTP is bound by residues Ser-20–Thr-27, Asp-88–His-92, and Asn-142–Asp-145.

It belongs to the TRAFAC class translation factor GTPase superfamily. Classic translation factor GTPase family. PrfC subfamily.

The protein resides in the cytoplasm. Its function is as follows. Increases the formation of ribosomal termination complexes and stimulates activities of RF-1 and RF-2. It binds guanine nucleotides and has strong preference for UGA stop codons. It may interact directly with the ribosome. The stimulation of RF-1 and RF-2 is significantly reduced by GTP and GDP, but not by GMP. The chain is Peptide chain release factor 3 from Alcanivorax borkumensis (strain ATCC 700651 / DSM 11573 / NCIMB 13689 / SK2).